The chain runs to 348 residues: Phenylalanine--tRNA ligase alpha subunit (348 aa).

Mg(2+) is bound at residue E259.

Belongs to the class-II aminoacyl-tRNA synthetase family. Phe-tRNA synthetase alpha subunit type 1 subfamily. In terms of assembly, tetramer of two alpha and two beta subunits. Requires Mg(2+) as cofactor.

It localises to the cytoplasm. The catalysed reaction is tRNA(Phe) + L-phenylalanine + ATP = L-phenylalanyl-tRNA(Phe) + AMP + diphosphate + H(+). The chain is Phenylalanine--tRNA ligase alpha subunit from Ligilactobacillus salivarius (strain UCC118) (Lactobacillus salivarius).